A 442-amino-acid chain; its full sequence is PCI domain-containing protein C1105.07c (442 aa).

Positions 224–415 constitute a PCI domain; sequence VTFRYYLGRC…STLVLKKDPS (192 aa).

It is found in the cytoplasm. Its subcellular location is the nucleus envelope. In Schizosaccharomyces pombe (strain 972 / ATCC 24843) (Fission yeast), this protein is PCI domain-containing protein C1105.07c.